Reading from the N-terminus, the 425-residue chain is Serine--tRNA ligase (425 aa).

Residue 231–233 (TAE) participates in L-serine binding. ATP is bound at residue 262–264 (RSE). An L-serine-binding site is contributed by Glu285. Residue 349–352 (EISS) participates in ATP binding. Ser385 is a binding site for L-serine.

The protein belongs to the class-II aminoacyl-tRNA synthetase family. Type-1 seryl-tRNA synthetase subfamily. Homodimer. The tRNA molecule binds across the dimer.

The protein resides in the cytoplasm. The catalysed reaction is tRNA(Ser) + L-serine + ATP = L-seryl-tRNA(Ser) + AMP + diphosphate + H(+). The enzyme catalyses tRNA(Sec) + L-serine + ATP = L-seryl-tRNA(Sec) + AMP + diphosphate + H(+). It participates in aminoacyl-tRNA biosynthesis; selenocysteinyl-tRNA(Sec) biosynthesis; L-seryl-tRNA(Sec) from L-serine and tRNA(Sec): step 1/1. Its function is as follows. Catalyzes the attachment of serine to tRNA(Ser). Is also able to aminoacylate tRNA(Sec) with serine, to form the misacylated tRNA L-seryl-tRNA(Sec), which will be further converted into selenocysteinyl-tRNA(Sec). The sequence is that of Serine--tRNA ligase from Bartonella tribocorum (strain CIP 105476 / IBS 506).